We begin with the raw amino-acid sequence, 863 residues long: Neuroligin-1 (863 aa).

A signal peptide spans 1–45; that stretch reads MALPRCTWPNYVWRAVMACLVHRGLGAPLTLCMLGCLLQAGHVLS. Over 46-717 the chain is Extracellular; sequence QKLDDVDPLV…DQRDYSTELS (672 aa). A glycan (N-linked (GlcNAc...) (complex) asparagine) is linked at Asn109. Cys117 and Cys153 are disulfide-bonded. Positions 183–212 are disordered; the sequence is KGGPLTKKQTDDLGDNDGAEDEDIRDSGGP. The segment covering 194 to 206 has biased composition (acidic residues); sequence DLGDNDGAEDEDI. Asn323 and Asn363 each carry an N-linked (GlcNAc...) (complex) asparagine glycan. 2 disulfides stabilise this stretch: Cys362-Cys373 and Cys532-Cys566. An N-linked (GlcNAc...) asparagine glycan is attached at Asn567. Residues 670–708 form a disordered region; the sequence is PSTDITFRPTRKNSVPVTSAFPTAKQDDPKQQPSPFSVD. Residues 681-690 are compositionally biased toward polar residues; the sequence is KNSVPVTSAF. Residues Ser703 and Ser706 are each glycosylated (O-linked (GalNAc...) serine). The chain crosses the membrane as a helical span at residues 718–738; the sequence is VTIAVGASLLFLNILAFAALY. Residues 739–863 are Cytoplasmic-facing; it reads YKKDKRRHDV…HPHSHSTTRV (125 aa). A disordered region spans residues 842–863; it reads GGQNNTLPHPHPHPHSHSTTRV. Basic residues predominate over residues 851–863; that stretch reads PHPHPHSHSTTRV.

This sequence belongs to the type-B carboxylesterase/lipase family. As to quaternary structure, interacts with neurexins NRXN1, NRXN2 and NRXN3. Interaction with neurexins is mediated by heparan sulfate glycan modification on neurexin. Interacts with NLGN3. Interacts with AIP1 and PDZRN3. Interacts (via its C-terminus) with DLG4/PSD-95 (via PDZ domain 3). Interacts with GOPC. As to expression, expressed in the blood vessel walls (at protein level). Highly expressed in brain through prenatal stages, and at lower levels in pancreas islet beta cells.

It is found in the cell membrane. The protein resides in the postsynaptic density. It localises to the synaptic cleft. The protein localises to the synaptic cell membrane. In terms of biological role, cell surface protein involved in cell-cell-interactions via its interactions with neurexin family members. Plays a role in synapse function and synaptic signal transmission, and probably mediates its effects by recruiting and clustering other synaptic proteins. May promote the initial formation of synapses, but is not essential for this. In vitro, triggers the de novo formation of presynaptic structures. May be involved in specification of excitatory synapses. Required to maintain wakefulness quality and normal synchrony of cerebral cortex activity during wakefulness and sleep. The protein is involved in nervous system development. The chain is Neuroligin-1 (NLGN1) from Homo sapiens (Human).